The sequence spans 489 residues: Bridging integrator 2 (489 aa).

Residues 28-244 (VLQKLGKTVE…MSKLEKQHSN (217 aa)) form the BAR domain. A compositionally biased stretch (low complexity) spans 267 to 302 (QSCAASSPVSPVSPVSPVTSPTSPSATSEPESVSAT). Residues 267-489 (QSCAASSPVS…ASGGLVGLFL (223 aa)) form a disordered region. Phosphoserine is present on Ser-273. The segment covering 311–331 (GGEDSCESQESLKDEEADEAQ) has biased composition (acidic residues). Residue Ser-357 is modified to Phosphoserine. The segment covering 358-368 (QEEALSSSAQS) has biased composition (low complexity). A phosphoserine mark is found at Ser-380, Ser-392, Ser-420, Ser-422, Ser-424, Ser-430, Ser-435, Ser-439, and Ser-443.

As to quaternary structure, homodimer. Interacts with BIN1. Interacts with ARHGEF6 (via SH3 domain), ARHGEF7 (via SH3 domain), SH3GL1, SH3GL2 and SH3GL3. Identified in a complex with ARHGEF6 and GIT2.

The protein resides in the cytoplasm. Its subcellular location is the cell projection. It is found in the podosome membrane. The protein localises to the cell cortex. It localises to the phagocytic cup. Its function is as follows. Promotes cell motility and migration, probably via its interaction with the cell membrane and with podosome proteins that mediate interaction with the cytoskeleton. Modulates membrane curvature and mediates membrane tubulation. Inhibits phagocytosis. Plays a role in podosome formation. The chain is Bridging integrator 2 (Bin2) from Mus musculus (Mouse).